Here is a 924-residue protein sequence, read N- to C-terminus: Protein argonaute 4 (924 aa).

Disordered stretches follow at residues 1 to 37 (MDST…PPNV) and 159 to 185 (TRAN…RRPN). Pro residues predominate over residues 26–37 (LPPPPPVIPPNV). Residues 162-173 (NGNGSPNGNESP) show a composition bias toward low complexity. The 117-residue stretch at 292–408 (PVVDFLIANQ…IPLELCALVP (117 aa)) folds into the PAZ domain. The region spanning 577–885 (FILCVLPDKK…AAAQLGTFMK (309 aa)) is the Piwi domain. The short motif at 584–591 (DKKNSDLY) is the Nuclear localization signal element.

This sequence belongs to the argonaute family. Ago subfamily. In terms of assembly, interacts with NRPE1 (via C-terminus). Binding to NRPE1 is required for its function in RdDM. Interacts with turnip crinkle virus (TCV) capsid protein P38; this interaction inhibits probably RNA silencing ability of AGO4. Interacts with SDE3. Binds to RDM3. Binds chromatin at loci subject to transcriptional silencing. Interacts with MBD6. In terms of tissue distribution, expressed in embryos, mature leaves, vascular tissue of the sepals, stamens and stigma, at the tip of the style and siliques.

Its subcellular location is the nucleus. The protein resides in the nucleolus. It is found in the nucleoplasm. The protein localises to the cajal body. Together with RDM3, required for transcriptional gene silencing (TGS) by DNA methylation and repressive histone modifications (H3K9me2) of several chromatin loci. Component of the RISC complex that associate with the small interfering RNA (siRNA) pathway involved in direct cytosine methylation at endogenous DNA repeats. Forms a AGO4/NRPE1/siRNA complex in cajal body, facilitating its function in RNA-directed gene silencing of target loci. Required for CpNpG and asymmetric DNA methylation as well as histone H3 'Lys-9' methylation (H3K9me) at SUP and SN1 loci. May be not required for CpG methylation. Required for the production and maintenance of retrotransposon SN1 and Copia and ribosomal 5S 25 nucleotide siRNAs specialized in gene silencing at chromatin level. Involved in de novo methylation of FWA gene and required for the maintenance of RNA-directed DNA methylation (RdDM) triggered by inverted repeat transgenes. Interacts with miRNA miR390 and miR172, targeting respectively TAS3 and AP2 mRNAs, and mediates cleavage of miRNA targets. Associates mainly with small RNAs of 24 nucleotide in length and preferentially recruits small RNAs with a 5' terminal adenosine. Targeted by the turnip yellows virus (TuYV) protein P0 (via F-box-like domain) for probable proteasome degradation and thereby inactivating AGO4 function in RNA silencing. Required for resistance to the bacterial pathogen P.syringae. Works independently of the RdDM pathway in mediating resistance to P.syringae. RdDM is involved in viral genome methylation as an epigenetic defense against geminiviruses. The chain is Protein argonaute 4 from Arabidopsis thaliana (Mouse-ear cress).